The primary structure comprises 185 residues: Lysozyme g (185 aa).

2 cysteine pairs are disulfide-bonded: cysteine 4-cysteine 60 and cysteine 18-cysteine 29. Residue glutamate 73 is part of the active site.

Belongs to the glycosyl hydrolase 23 family.

It localises to the secreted. It catalyses the reaction Hydrolysis of (1-&gt;4)-beta-linkages between N-acetylmuramic acid and N-acetyl-D-glucosamine residues in a peptidoglycan and between N-acetyl-D-glucosamine residues in chitodextrins.. The chain is Lysozyme g from Cygnus atratus (Black swan).